Reading from the N-terminus, the 357-residue chain is Dual-specificity RNA methyltransferase RlmN (357 aa).

Glu89 (proton acceptor) is an active-site residue. In terms of domain architecture, Radical SAM core spans Glu109–Asp340. Cysteines 116 and 345 form a disulfide. Residues Cys123, Cys127, and Cys130 each coordinate [4Fe-4S] cluster. S-adenosyl-L-methionine-binding positions include Gly173–Glu174, Ser203, Ser226–His228, and Asn302. Catalysis depends on Cys345, which acts as the S-methylcysteine intermediate.

It belongs to the radical SAM superfamily. RlmN family. [4Fe-4S] cluster serves as cofactor.

It localises to the cytoplasm. It catalyses the reaction adenosine(2503) in 23S rRNA + 2 reduced [2Fe-2S]-[ferredoxin] + 2 S-adenosyl-L-methionine = 2-methyladenosine(2503) in 23S rRNA + 5'-deoxyadenosine + L-methionine + 2 oxidized [2Fe-2S]-[ferredoxin] + S-adenosyl-L-homocysteine. The catalysed reaction is adenosine(37) in tRNA + 2 reduced [2Fe-2S]-[ferredoxin] + 2 S-adenosyl-L-methionine = 2-methyladenosine(37) in tRNA + 5'-deoxyadenosine + L-methionine + 2 oxidized [2Fe-2S]-[ferredoxin] + S-adenosyl-L-homocysteine. Specifically methylates position 2 of adenine 2503 in 23S rRNA and position 2 of adenine 37 in tRNAs. m2A2503 modification seems to play a crucial role in the proofreading step occurring at the peptidyl transferase center and thus would serve to optimize ribosomal fidelity. The chain is Dual-specificity RNA methyltransferase RlmN from Helicobacter pylori (strain HPAG1).